The following is a 439-amino-acid chain: MRLSRFFLPILKENPKEAEIVSHRLMLRAGMLRQEAAGIYAWLPLGHRVLKKIEQIVREEQNRAGAIELLMPTLQLADLWRESGRYDAYGPEMLRISDRHKRELLYGPTNEEMITEIFRAYVKSYKSLPLNLYHIQWKFRDEQRPRFGVMRGREFLMKDAYSFDVDEAAARKSYNRMFVAYLRTFARMGLKAIPMRAETGPIGGDLSHEFIVLAETGESGVYCDRDVLSLPVPDETVDYDGDLTPIIKQWTSVYAATEDVHDAVRYESEVPEANRLHTRGIEVGQIFYFGTKYSDSMKANVAGPDGTDAPIHGGSYGVGVSRLVGAIIEACHDDNGIIWPEEVAPFRVAILNLKQGDAATDAACEQLYKELAAKGVDVLYDDTDQRAGAKFATADLIGIPWQVLVGPKGLADGKIELKRRSDGSRENIALAETVARLAP.

This sequence belongs to the class-II aminoacyl-tRNA synthetase family. ProS type 2 subfamily. As to quaternary structure, homodimer.

Its subcellular location is the cytoplasm. It carries out the reaction tRNA(Pro) + L-proline + ATP = L-prolyl-tRNA(Pro) + AMP + diphosphate. Catalyzes the attachment of proline to tRNA(Pro) in a two-step reaction: proline is first activated by ATP to form Pro-AMP and then transferred to the acceptor end of tRNA(Pro). The chain is Proline--tRNA ligase from Rhodopseudomonas palustris (strain HaA2).